The following is a 645-amino-acid chain: 1,4-alpha-glucan branching enzyme GlgB (645 aa).

Asp309 serves as the catalytic Nucleophile. The Proton donor role is filled by Glu352. Residues 619 to 645 (VKTRKGSKKQDGSKTKVRSNVTSRGKR) form a disordered region. Over residues 636-645 (RSNVTSRGKR) the composition is skewed to polar residues.

The protein belongs to the glycosyl hydrolase 13 family. GlgB subfamily. Monomer.

The enzyme catalyses Transfers a segment of a (1-&gt;4)-alpha-D-glucan chain to a primary hydroxy group in a similar glucan chain.. It functions in the pathway glycan biosynthesis; glycogen biosynthesis. Catalyzes the formation of the alpha-1,6-glucosidic linkages in glycogen by scission of a 1,4-alpha-linked oligosaccharide from growing alpha-1,4-glucan chains and the subsequent attachment of the oligosaccharide to the alpha-1,6 position. The chain is 1,4-alpha-glucan branching enzyme GlgB from Bacillus cereus (strain AH820).